We begin with the raw amino-acid sequence, 830 residues long: Frameshifted structural polyprotein (830 aa).

The disordered stretch occupies residues Ala-58–Glu-109. Positions Pro-65 to Lys-107 are enriched in basic residues. The ribosome-binding stretch occupies residues Lys-94–Gly-106. Cys-119 and Cys-134 are oxidised to a cystine. One can recognise a Peptidase S3 domain in the interval Cys-119–Trp-267. Catalysis depends on charge relay system residues His-145, Asp-167, and Ser-219. Asn-280, Asn-327, Asn-533, and Asn-595 each carry an N-linked (GlcNAc...) asparagine; by host glycan. A helical transmembrane segment spans residues Ala-702–Val-722. S-palmitoyl cysteine; by host attachment occurs at residues Cys-718, Cys-728, Cys-748, and Cys-749. Residues Cys-728 to Cys-748 are transient transmembrane before p62-6K protein processing. 2 helical membrane-spanning segments follow: residues Ala-771 to Leu-791 and Asn-793 to Arg-813.

In terms of assembly, homodimer. Homomultimer. Interacts with host karyopherin KPNA4; this interaction allows the nuclear import of the viral capsid protein. Precursor of protein E3/E2: The precursor of protein E3/E2 and E1 form a heterodimer shortly after synthesis. Interacts with host IRAK1; the interaction leads to inhibition of IRAK1-dependent signaling. Processing of the precursor of protein E3/E2 into E2 and E3 results in a heterodimer of the spike glycoproteins E2 and E1. Spike at virion surface are constituted of three E2-E1 heterodimers. Interacts with 6K protein. Interacts with host MXRA8; this interaction mediates virus entry. Post-translationally, specific enzymatic cleavages in vivo yield mature proteins. Capsid protein is auto-cleaved during polyprotein translation, unmasking a signal peptide at the N-terminus of the precursor of E3/E2. The remaining polyprotein is then targeted to the host endoplasmic reticulum, where host signal peptidase cleaves it into pE2 and TF. pE2 is further processed to mature E3 and E2 by host furin in trans-Golgi vesicle.

Its subcellular location is the virion. The protein resides in the host cytoplasm. It is found in the host cell membrane. The protein localises to the host nucleus. It localises to the virion membrane. The catalysed reaction is Autocatalytic release of the core protein from the N-terminus of the togavirus structural polyprotein by hydrolysis of a -Trp-|-Ser- bond.. Functionally, forms an icosahedral capsid with a T=4 symmetry composed of 240 copies of the capsid protein surrounded by a lipid membrane through which penetrate 80 spikes composed of trimers of E1-E2 heterodimers. The capsid protein binds to the viral RNA genome at a site adjacent to a ribosome binding site for viral genome translation following genome release. Possesses a protease activity that results in its autocatalytic cleavage from the nascent structural protein. Following its self-cleavage, the capsid protein transiently associates with ribosomes, and within several minutes the protein binds to viral RNA and rapidly assembles into icosahedric core particles. The resulting nucleocapsid eventually associates with the cytoplasmic domain of the spike glycoprotein E2 at the cell membrane, leading to budding and formation of mature virions. In case of infection, new virions attach to target cells and after clathrin-mediated endocytosis their membrane fuses with the host endosomal membrane. This leads to the release of the nucleocapsid into the cytoplasm, followed by an uncoating event necessary for the genomic RNA to become accessible. The uncoating might be triggered by the interaction of capsid proteins with ribosomes. Binding of ribosomes would release the genomic RNA since the same region is genomic RNA-binding and ribosome-binding. Specifically inhibits interleukin-1 receptor-associated kinase 1/IRAK1-dependent signaling during viral entry, representing a means by which the alphaviruses may evade innate immune detection and activation prior to viral gene expression. Its function is as follows. Provides the signal sequence for p62 (E3/E2) translocation to the host endoplasmic reticulum. Mediates pH protection of E1 during secretory pathway trans- port. Plays a role in viral attachment to target host cell, by binding to the cell receptor. Synthesized as a p62 precursor which is processed by furin at the cell membrane just before virion budding, giving rise to E2-E1 heterodimer. The p62-E1 heterodimer is stable, whereas E2-E1 is unstable and dissociate at low pH. p62 is processed at the last step, presumably to avoid E1 fusion activation before its final export to cell surface. E2 C-terminus contains a transitory transmembrane that would be disrupted by palmitoylation, resulting in reorientation of the C-terminal tail from lumenal to cytoplasmic side. This step is critical since E2 C-terminus is involved in budding by interacting with capsid proteins. This release of E2 C-terminus in cytoplasm occurs lately in protein export, and precludes premature assembly of particles at the endoplasmic reticulum membrane. In terms of biological role, virion component that may play a role during viral assembly. This is Frameshifted structural polyprotein from Aedes (Middle-African hedgehog).